We begin with the raw amino-acid sequence, 394 residues long: HORMA domain-containing protein 1 (394 aa).

The HORMA domain maps to H24–V226. Residues I253–K282 show a composition bias toward basic and acidic residues. The tract at residues I253–I394 is disordered. Residues E288–E300 show a composition bias toward acidic residues. Composition is skewed to polar residues over residues L310–T324 and K343–K352. Residues Q362–D374 show a composition bias toward basic and acidic residues. Residue S376 is modified to Phosphoserine. Residues K383–K386 carry the Nuclear localization signal motif.

As to quaternary structure, interacts with HORMAD2. Interacts with IHO1. In terms of processing, phosphorylated at Ser-377 in a SPO11-dependent manner. As to expression, testis-specific. Over-expressed in carcinomas.

It is found in the nucleus. The protein localises to the chromosome. Functionally, plays a key role in meiotic progression. Regulates 3 different functions during meiosis: ensures that sufficient numbers of processed DNA double-strand breaks (DSBs) are available for successful homology search by increasing the steady-state numbers of single-stranded DSB ends. Promotes synaptonemal-complex formation independently of its role in homology search. Plays a key role in the male mid-pachytene checkpoint and the female meiotic prophase checkpoint: required for efficient build-up of ATR activity on unsynapsed chromosome regions, a process believed to form the basis of meiotic silencing of unsynapsed chromatin (MSUC) and meiotic prophase quality control in both sexes. The sequence is that of HORMA domain-containing protein 1 from Homo sapiens (Human).